We begin with the raw amino-acid sequence, 329 residues long: Malate dehydrogenase (329 aa).

Residue 12 to 18 (GAAGQIG) participates in NAD(+) binding. Residues R95 and R101 each coordinate substrate. NAD(+) is bound by residues N108, Q115, and 132–134 (VGN). The substrate site is built by N134 and R165. H190 (proton acceptor) is an active-site residue.

This sequence belongs to the LDH/MDH superfamily. MDH type 2 family. As to quaternary structure, homodimer.

The enzyme catalyses (S)-malate + NAD(+) = oxaloacetate + NADH + H(+). With respect to regulation, substrate inhibition is observed at high concentrations of oxaloacetate. Catalyzes the reversible oxidation of malate to oxaloacetate. Catalyzes the reduction of oxaloacetate more efficiently than the oxidation of malate. The chain is Malate dehydrogenase from Syntrophobacter fumaroxidans (strain DSM 10017 / MPOB).